The sequence spans 124 residues: Late histone H2B.2.1 (124 aa).

The disordered stretch occupies residues 1–32 (MPAKQTSGKGAKKAGKAKGRPAGASKTRRRKR). The segment covering 10–19 (GAKKAGKAKG) has biased composition (basic residues). The O-linked (GlcNAc) serine glycan is linked to S111. Residue K119 forms a Glycyl lysine isopeptide (Lys-Gly) (interchain with G-Cter in ubiquitin) linkage.

This sequence belongs to the histone H2B family. As to quaternary structure, the nucleosome is a histone octamer containing two molecules each of H2A, H2B, H3 and H4 assembled in one H3-H4 heterotetramer and two H2A-H2B heterodimers. The octamer wraps approximately 147 bp of DNA. Monoubiquitination of Lys-119 gives a specific tag for epigenetic transcriptional activation and is also prerequisite for histone H3 'Lys-4' and 'Lys-79' methylation. Post-translationally, glcNAcylation at Ser-111 promotes monoubiquitination of Lys-119. It fluctuates in response to extracellular glucose, and associates with transcribed genes.

Its subcellular location is the nucleus. The protein localises to the chromosome. Core component of nucleosome. Nucleosomes wrap and compact DNA into chromatin, limiting DNA accessibility to the cellular machineries which require DNA as a template. Histones thereby play a central role in transcription regulation, DNA repair, DNA replication and chromosomal stability. DNA accessibility is regulated via a complex set of post-translational modifications of histones, also called histone code, and nucleosome remodeling. The chain is Late histone H2B.2.1 from Psammechinus miliaris (Green sea urchin).